The chain runs to 973 residues: NLR family member X1 (973 aa).

The transit peptide at 1 to 84 (MRWGCHLPRT…EAIQRHRRNL (84 aa)) directs the protein to the mitochondrion. The segment at 73–554 (ATEAIQRHRR…RILPLLFNLL (482 aa)) is required for interaction with MAVS. Residues 158-481 (QTVVLYGTVG…LRFFLAPCVE (324 aa)) enclose the NACHT domain. ATP is bound at residue 164–171 (GTVGTGKS). The interval 554 to 972 (LKVVPRVFGR…TLLEQLGGSG (419 aa)) is required for the repression of MAVS-induced interferon signaling. One can recognise an LRRNT domain in the interval 665 to 692 (RQVLPPSELLDHLFFHYEFQNQRFSAEV). 8 LRR repeats span residues 693 to 716 (LGSLRQLNLAGVRMTPLKCTVVAS), 722 to 745 (RHPLDEVNLASCQLDPAGLHTLMP), 747 to 775 (LLRARKLGLQLNNLGPEACRDLRDLLLHD), 776 to 799 (QCQITTLRLSNNPLTAAGVGVLMD), 809 to 832 (HLSLLHTDLGDEGLELLAAQLDRN), 833 to 855 (KQLQELNVAYNGAGDTVALALAK), 856 to 875 (AARKHPSLELLHLYFNELSS), and 876 to 897 (EGRQVLRDLGGSGEGGARVVAS). One can recognise an LRRCT domain in the interval 904–968 (VSEYWSVILS…SEVKTLLEQL (65 aa)).

This sequence belongs to the NLRP family. In terms of assembly, homohexamer. Interacts with MAVS. Interacts with TUFM.

Its subcellular location is the mitochondrion outer membrane. Its function is as follows. Participates in antiviral signaling. Acts as a negative regulator of MAVS-mediated antiviral responses, through the inhibition of the virus-induced RLH (RIG-like helicase)-MAVS interaction. Instead, promotes autophagy by interacting with TUFM and subsequently recruiting the autophagy-related proteins ATG5 and ATG12. Also regulates MAVS-dependent NLRP3 inflammasome activation to attenuate apoptosis. Has no inhibitory function on NF-kappa-B signaling pathway, but enhances NF-kappa-B and JUN N-terminal kinase dependent signaling through the production of reactive oxygen species. Regulates viral mediated-inflammation and energy metabolism in a sex-dependent manner. In females, prevents uncontrolled inflammation and energy metabolism and thus, may contribute to the sex differences observed in infectious and inflammatory diseases. In Rattus norvegicus (Rat), this protein is NLR family member X1 (Nlrx1).